The primary structure comprises 107 residues: uncharacterized protein (107 aa).

2 helical membrane-spanning segments follow: residues 14-34 and 68-88; these read YLAE…IVAW and FFVF…LVPI.

It is found in the cell membrane. This is an uncharacterized protein from Haemophilus influenzae (strain ATCC 51907 / DSM 11121 / KW20 / Rd).